Reading from the N-terminus, the 709-residue chain is Coiled-coil domain-containing protein 13 (709 aa).

Coiled coils occupy residues 70–97 (IFEKRVLEDEIQHLRSELRETVDENGRL), 139–178 (ELSKKNRGLMAESESAKVRIKQLTNRIQELEHQLQMASAK), and 206–288 (EVKA…QRQN). Ser-258 carries the phosphoserine modification. The interval 281–312 (KQLGQRQNKPAGSSSSEVPLSSDSRKMTAQEK) is disordered. The segment covering 293–302 (SSSSEVPLSS) has biased composition (low complexity). Residues 323-457 (DKQESWEKLA…ELEIGQLSVQ (135 aa)) are a coiled coil. Disordered stretches follow at residues 462–499 (KGGGEGASPADARFPEDQTPITNSPASAGDHVGRLGSS), 512–542 (SALTRPSLPSPHGTSPRFSDSPEQKGWQAQA), and 600–641 (KMRL…SSTQ). 2 positions are modified to phosphoserine: Ser-469 and Ser-532. Residues 539–604 (QAQAAEMKAL…EQHLEKMRLE (66 aa)) are a coiled coil.

As to quaternary structure, interacts with PCM1, CEP290 and PCNT.

The protein localises to the cytoplasm. It is found in the cytoskeleton. It localises to the microtubule organizing center. The protein resides in the centrosome. Its subcellular location is the centriolar satellite. The protein localises to the cilium basal body. In terms of biological role, required for primary cilia formation and promotes the localization of the ciliopathy protein BBS4 to both centriolar satellites and cilia. This is Coiled-coil domain-containing protein 13 from Mus musculus (Mouse).